A 449-amino-acid polypeptide reads, in one-letter code: Probable D-serine dehydratase (449 aa).

An N6-(pyridoxal phosphate)lysine modification is found at Lys119.

This sequence belongs to the serine/threonine dehydratase family. DsdA subfamily. Pyridoxal 5'-phosphate serves as cofactor.

It catalyses the reaction D-serine = pyruvate + NH4(+). The polypeptide is Probable D-serine dehydratase (Pseudomonas putida (strain ATCC 700007 / DSM 6899 / JCM 31910 / BCRC 17059 / LMG 24140 / F1)).